A 567-amino-acid chain; its full sequence is Wee1-like protein kinase 2 (567 aa).

4 stretches are compositionally biased toward basic and acidic residues: residues 1–12 (MDDKDIDKELRQ), 25–35 (EGQKKVEESRE), 42–51 (EKGEVQDSEA), and 64–77 (HELDTSSEKDKESP). The interval 1 to 117 (MDDKDIDKEL…DSPSTPKTML (117 aa)) is disordered. Ser-76 carries the post-translational modification Phosphoserine. The short motif at 173–175 (KRK) is the Nuclear localization signal element. The 275-residue stretch at 212-486 (FLEVEKIGVG…AAALARNTVL (275 aa)) folds into the Protein kinase domain. ATP is bound by residues 218–226 (IGVGEFGTV) and Lys-241. Positions 315-329 (KLKDILLQISLGLNY) match the Nuclear export signal motif. The Proton acceptor role is filled by Asp-339. Positions 344 and 380 each coordinate Mg(2+). The stretch at 494-519 (EELQQQLNLEKFKTATLERELREAQQ) forms a coiled coil. A disordered region spans residues 514-567 (LREAQQAQSPQGYTHHGDTGVSGTHTGSRSTKRLVGGKSARSSSFTSGEREPLH).

The protein belongs to the protein kinase superfamily. Ser/Thr protein kinase family. WEE1 subfamily. Post-translationally, phosphorylated on serine residues. Phosphorylation leads to increase its activity. Expressed in oocytes (at protein level). May also be expressed in testis.

The protein localises to the nucleus. It carries out the reaction L-tyrosyl-[protein] + ATP = O-phospho-L-tyrosyl-[protein] + ADP + H(+). Its function is as follows. Oocyte-specific protein tyrosine kinase that phosphorylates and inhibits CDK1/CDC2 and acts as a key regulator of meiosis during both prophase I and metaphase II. Required to maintain meiotic arrest in oocytes during the germinal vesicle (GV) stage, a long period of quiescence at dictyate prophase I, by phosphorylating CDK1 at 'Tyr-15', leading to inhibit CDK1 activity and prevent meiotic reentry. Also required for metaphase II exit during egg activation by phosphorylating CDK1 at 'Tyr-15', to ensure exit from meiosis in oocytes and promote pronuclear formation. In Homo sapiens (Human), this protein is Wee1-like protein kinase 2 (WEE2).